Consider the following 370-residue polypeptide: 4-hydroxy-3-methylbut-2-en-1-yl diphosphate synthase (flavodoxin) (370 aa).

4 residues coordinate [4Fe-4S] cluster: Cys265, Cys268, Cys300, and Glu307.

This sequence belongs to the IspG family. Requires [4Fe-4S] cluster as cofactor.

The catalysed reaction is (2E)-4-hydroxy-3-methylbut-2-enyl diphosphate + oxidized [flavodoxin] + H2O + 2 H(+) = 2-C-methyl-D-erythritol 2,4-cyclic diphosphate + reduced [flavodoxin]. The protein operates within isoprenoid biosynthesis; isopentenyl diphosphate biosynthesis via DXP pathway; isopentenyl diphosphate from 1-deoxy-D-xylulose 5-phosphate: step 5/6. Converts 2C-methyl-D-erythritol 2,4-cyclodiphosphate (ME-2,4cPP) into 1-hydroxy-2-methyl-2-(E)-butenyl 4-diphosphate. The polypeptide is 4-hydroxy-3-methylbut-2-en-1-yl diphosphate synthase (flavodoxin) (Symbiobacterium thermophilum (strain DSM 24528 / JCM 14929 / IAM 14863 / T)).